The chain runs to 164 residues: Putative 4-hydroxy-4-methyl-2-oxoglutarate aldolase (164 aa).

Substrate-binding positions include 80-83 (GGNL) and Arg102. Position 103 (Asp103) interacts with a divalent metal cation.

It belongs to the class II aldolase/RraA-like family. In terms of assembly, homotrimer. A divalent metal cation is required as a cofactor.

It carries out the reaction 4-hydroxy-4-methyl-2-oxoglutarate = 2 pyruvate. The enzyme catalyses oxaloacetate + H(+) = pyruvate + CO2. Catalyzes the aldol cleavage of 4-hydroxy-4-methyl-2-oxoglutarate (HMG) into 2 molecules of pyruvate. Also contains a secondary oxaloacetate (OAA) decarboxylase activity due to the common pyruvate enolate transition state formed following C-C bond cleavage in the retro-aldol and decarboxylation reactions. The polypeptide is Putative 4-hydroxy-4-methyl-2-oxoglutarate aldolase (Paraburkholderia phytofirmans (strain DSM 17436 / LMG 22146 / PsJN) (Burkholderia phytofirmans)).